Here is a 249-residue protein sequence, read N- to C-terminus: Major phosphate-irrepressible acid phosphatase (249 aa).

An N-terminal signal peptide occupies residues Met-1–Ala-20.

It belongs to the class A bacterial acid phosphatase family. In terms of assembly, homotetramer.

Its subcellular location is the periplasm. The enzyme catalyses a phosphate monoester + H2O = an alcohol + phosphate. The polypeptide is Major phosphate-irrepressible acid phosphatase (phoC) (Morganella morganii (Proteus morganii)).